The primary structure comprises 351 residues: MSELPPYDSFLLVSFGGPEGQDDVMPFLENVLRGKNVPRERMLEVAEHYKHFGGVSPINEQNRQLIAALQKRFDANGIDLPIYWGNRNWDPYFADTLRQMKADGKKRSLAFFTSMFSCYSGCRQYRENIIQAREEVGEGAPLVEKVRMGFNHPGFIAAMADNVSKAAQTIGASPARTKVLFTAHSIPMGMADNCDYEKQLRESCRLVADACGAVDWDLVYQSRSGPPSQPWLEPDVLDAIAEMDDAKKLESLVILPIGFVSDHMEVLFDLDEEAAQLCRERGIKMARASAAGTHPDFVEMICGLVQERLGKLNEKPALGELGPWHDVCPQDCCLYTPRRPPVAGGRPVQAN.

Fe cation-binding residues include histidine 184 and glutamate 265.

The protein belongs to the ferrochelatase family.

It localises to the cytoplasm. It catalyses the reaction heme b + 2 H(+) = protoporphyrin IX + Fe(2+). Its pathway is porphyrin-containing compound metabolism; protoheme biosynthesis; protoheme from protoporphyrin-IX: step 1/1. Functionally, catalyzes the ferrous insertion into protoporphyrin IX. This is Ferrochelatase from Rhodopirellula baltica (strain DSM 10527 / NCIMB 13988 / SH1).